The primary structure comprises 626 residues: Ankyrin repeat domain-containing protein 55 (626 aa).

ANK repeat units lie at residues 25–54 (VDLAMVYQAASNGDVNSLTSVIREDPSILE), 59–88 (EGCTPLMHAVSGRQVDTVKLLLKMGANINT), 92–124 (YGRTSLCLATYLGWLEGCVSLLRNGAKHNIPDK), 125–156 (NGRLPLHAATAEPDVRLLIVLLQQSSLSEINH), 160–189 (EGMTPLHWAAFHNRPQHTQMLLKKGADPTL), 193–222 (DFKTALHWAVQSGNRILCSIILSHRQGPSI), 229–259 (SGKTCVHIAAASGFGDIINDLAKVPECNLQA), 263–292 (DDRTPLHWAAASGKAECVQSLLDLGMDSNL), and 296–325 (NESTPLAYALYCGHTACVRLLSREGRAEPA). The segment covering 354–372 (KEEQKAHQKDQSRARPKEE) has biased composition (basic and acidic residues). Disordered stretches follow at residues 354–377 (KEEQKAHQKDQSRARPKEEETSEV), 455–491 (HAGLNAGPQHTAQRSQKSRSEQDLLNNRTGCPVSLEN), and 522–626 (QPGH…HDEN). Ser-474 is subject to Phosphoserine. Residues 604–614 (QRGHDPPRAEE) show a composition bias toward basic and acidic residues. A compositionally biased stretch (polar residues) spans 616-626 (GGSSSPTHDEN).

In Mus musculus (Mouse), this protein is Ankyrin repeat domain-containing protein 55 (Ankrd55).